Consider the following 184-residue polypeptide: dITP/XTP pyrophosphatase (184 aa).

A substrate-binding site is contributed by 5–10; that stretch reads SSNRHK. 2 residues coordinate Mg(2+): E33 and D62. D62 (proton acceptor) is an active-site residue. Residues S63, 136 to 139, K158, and 163 to 164 contribute to the substrate site; these read WGFD and HR.

The protein belongs to the HAM1 NTPase family. In terms of assembly, homodimer. Mg(2+) is required as a cofactor.

It carries out the reaction XTP + H2O = XMP + diphosphate + H(+). The catalysed reaction is dITP + H2O = dIMP + diphosphate + H(+). It catalyses the reaction ITP + H2O = IMP + diphosphate + H(+). Its function is as follows. Pyrophosphatase that catalyzes the hydrolysis of nucleoside triphosphates to their monophosphate derivatives, with a high preference for the non-canonical purine nucleotides XTP (xanthosine triphosphate), dITP (deoxyinosine triphosphate) and ITP. Seems to function as a house-cleaning enzyme that removes non-canonical purine nucleotides from the nucleotide pool, thus preventing their incorporation into DNA/RNA and avoiding chromosomal lesions. This chain is dITP/XTP pyrophosphatase, found in Korarchaeum cryptofilum (strain OPF8).